The following is a 256-amino-acid chain: 5'-nucleotidase SurE (256 aa).

Residues Asp-8, Asp-9, Ser-42, and Asn-94 each coordinate a divalent metal cation.

Belongs to the SurE nucleotidase family. A divalent metal cation serves as cofactor.

The protein localises to the cytoplasm. It catalyses the reaction a ribonucleoside 5'-phosphate + H2O = a ribonucleoside + phosphate. In terms of biological role, nucleotidase that shows phosphatase activity on nucleoside 5'-monophosphates. The protein is 5'-nucleotidase SurE of Ehrlichia chaffeensis (strain ATCC CRL-10679 / Arkansas).